We begin with the raw amino-acid sequence, 348 residues long: Phospho-2-dehydro-3-deoxyheptonate aldolase, Trp-sensitive (348 aa).

The protein belongs to the class-I DAHP synthase family.

The catalysed reaction is D-erythrose 4-phosphate + phosphoenolpyruvate + H2O = 7-phospho-2-dehydro-3-deoxy-D-arabino-heptonate + phosphate. Its pathway is metabolic intermediate biosynthesis; chorismate biosynthesis; chorismate from D-erythrose 4-phosphate and phosphoenolpyruvate: step 1/7. Stereospecific condensation of phosphoenolpyruvate (PEP) and D-erythrose-4-phosphate (E4P) giving rise to 3-deoxy-D-arabino-heptulosonate-7-phosphate (DAHP). In Enterobacter agglomerans (Erwinia herbicola), this protein is Phospho-2-dehydro-3-deoxyheptonate aldolase, Trp-sensitive (aroH).